The chain runs to 272 residues: Soluble interferon gamma receptor OPG193 (272 aa).

The first 13 residues, 1–13, serve as a signal peptide directing secretion; it reads MRYIIILAVLFIN. N-linked (GlcNAc...) asparagine; by host glycosylation is found at Asn42, Asn150, and Asn267.

The protein belongs to the type II cytokine receptor family. In terms of assembly, homodimer. Interacts with host IFNG.

The protein localises to the secreted. Functionally, counteracts the antiviral effects of host IFN-gamma. Acts as a soluble IFN-gamma receptor and thus inhibits the interaction between host IFN-gamma and its receptor. This chain is Soluble interferon gamma receptor OPG193 (OPG193), found in Bos taurus (Bovine).